A 106-amino-acid polypeptide reads, in one-letter code: UPF0060 membrane protein Oant_2511 (106 aa).

Helical transmembrane passes span 3-23 (FAIYAAAALFEIAGCFAFWAW), 30-50 (PLWLAPGMVCLALFAYLLTLI), 60-80 (AAYGGIYIIASILWIWFAEGA), and 84-104 (RWDVVGACTAFAGTCIILFAP).

The protein belongs to the UPF0060 family.

The protein localises to the cell inner membrane. This is UPF0060 membrane protein Oant_2511 from Brucella anthropi (strain ATCC 49188 / DSM 6882 / CCUG 24695 / JCM 21032 / LMG 3331 / NBRC 15819 / NCTC 12168 / Alc 37) (Ochrobactrum anthropi).